The chain runs to 101 residues: Ascorbate-specific PTS system EIIB component (101 aa).

Positions 3 to 96 (VRILAVCGNG…KLLEVIKEHF (94 aa)) constitute a PTS EIIB type-2 domain. C9 functions as the Phosphocysteine intermediate in the catalytic mechanism. C9 bears the Phosphocysteine mark.

It is found in the cytoplasm. The catalysed reaction is N(pros)-phospho-L-histidyl-[protein] + L-ascorbate(out) = L-ascorbate 6-phosphate(in) + L-histidyl-[protein]. Its function is as follows. The phosphoenolpyruvate-dependent sugar phosphotransferase system (sugar PTS), a major carbohydrate active transport system, catalyzes the phosphorylation of incoming sugar substrates concomitantly with their translocation across the cell membrane. The enzyme II UlaABC PTS system is involved in ascorbate transport. The polypeptide is Ascorbate-specific PTS system EIIB component (ulaB) (Salmonella choleraesuis (strain SC-B67)).